The primary structure comprises 105 residues: Large ribosomal subunit protein bL21 (105 aa).

Belongs to the bacterial ribosomal protein bL21 family. In terms of assembly, part of the 50S ribosomal subunit. Contacts protein L20.

Functionally, this protein binds to 23S rRNA in the presence of protein L20. This chain is Large ribosomal subunit protein bL21, found in Dictyoglomus turgidum (strain DSM 6724 / Z-1310).